Consider the following 265-residue polypeptide: Gamma-secretase subunit APH-1A (265 aa).

Residues 1–2 (MG) are Lumenal-facing. A helical membrane pass occupies residues 3-23 (AAVFFGCTFVAFGPAFALFLI). The Cytoplasmic portion of the chain corresponds to 24–31 (TVAGDPLR). A helical transmembrane segment spans residues 32-52 (VIILVAGAFFWLVSLLLASVV). Over 53–68 (WFILVHVTDRSDARLQ) the chain is Lumenal. Residues 69–89 (YGLLIFGAAVSVLLQEVFRFA) form a helical membrane-spanning segment. The Cytoplasmic portion of the chain corresponds to 90-118 (YYKLLKKADEGLASLSEDGRSPISIRQMA). The chain crosses the membrane as a helical span at residues 119–139 (YVSGLSFGIISGVFSVINILA). Residues 140-158 (DALGPGVVGIHGDSPYYFL) are Lumenal-facing. Residues 159–179 (TSAFLTAAIILLHTFWGVVFF) traverse the membrane as a helical segment. At 180 to 186 (DACERRR) the chain is on the cytoplasmic side. A helical transmembrane segment spans residues 187 to 207 (YWALGLVVGSHLLTSGLTFLN). The Lumenal segment spans residues 208–213 (PWYEAS). Residues 214-234 (LLPIYAVTVSMGLWAFITAGG) traverse the membrane as a helical segment. The Cytoplasmic segment spans residues 235 to 265 (SLRSIQRSLLCRRQEDSRVMVYSALRIPPED).

The protein belongs to the APH-1 family. In terms of assembly, the functional gamma-secretase complex is composed of at least four polypeptides: a presenilin homodimer (PSEN1 or PSEN2), nicastrin (NCSTN), APH1 (APH1A or APH1B) and PSENEN/PEN2. Widely expressed. Expressed in leukocytes, lung, placenta, small intestine, liver, kidney, spleen thymus, skeletal muscle, heart and brain. Isoform 1 and isoform 2 are nearly expressed at the same level.

Its subcellular location is the endoplasmic reticulum membrane. It is found in the golgi apparatus. The protein localises to the golgi stack membrane. In terms of biological role, non-catalytic subunit of the gamma-secretase complex, an endoprotease complex that catalyzes the intramembrane cleavage of integral membrane proteins such as Notch receptors and APP (amyloid-beta precursor protein). Required for normal gamma-secretase assembly. The gamma-secretase complex plays a role in Notch and Wnt signaling cascades and regulation of downstream processes via its role in processing key regulatory proteins, and by regulating cytosolic CTNNB1 levels. This Homo sapiens (Human) protein is Gamma-secretase subunit APH-1A (APH1A).